Reading from the N-terminus, the 136-residue chain is ATP synthase epsilon chain (136 aa).

The interval 95–115 (DFSEAQSRLEEANKGSDRREQ) is disordered. Over residues 101–115 (SRLEEANKGSDRREQ) the composition is skewed to basic and acidic residues.

This sequence belongs to the ATPase epsilon chain family. F-type ATPases have 2 components, CF(1) - the catalytic core - and CF(0) - the membrane proton channel. CF(1) has five subunits: alpha(3), beta(3), gamma(1), delta(1), epsilon(1). CF(0) has three main subunits: a, b and c.

It localises to the cellular thylakoid membrane. In terms of biological role, produces ATP from ADP in the presence of a proton gradient across the membrane. The polypeptide is ATP synthase epsilon chain (Rippkaea orientalis (strain PCC 8801 / RF-1) (Cyanothece sp. (strain PCC 8801))).